The primary structure comprises 131 residues: C-type natriuretic peptide 1 (131 aa).

An N-terminal signal peptide occupies residues 1-22; that stretch reads MLCPVLLCATLLLLTPFEVTEA. Residues 23–109 constitute a propeptide that is removed on maturation; sequence RALHPSADAV…KRAEPDRSRR (87 aa). An intrachain disulfide couples C115 to C131.

It belongs to the natriuretic peptide family. Brain and spinal cord.

The protein localises to the secreted. Exhibits natriuretic and vasodepressant activity. Has cGMP-stimulating activity. May help to regulate body fluid homeostasis in a variety of aquatic environments. This chain is C-type natriuretic peptide 1, found in Oryzias latipes (Japanese rice fish).